A 312-amino-acid polypeptide reads, in one-letter code: Ribosomal RNA small subunit methyltransferase H (312 aa).

Residues 35–37 (GGH), Asp-55, Phe-79, Asp-101, and Gln-108 contribute to the S-adenosyl-L-methionine site. The segment at 286-306 (LKPSEHEVNENSRSRSSVLRV) is disordered. A compositionally biased stretch (basic and acidic residues) spans 287–298 (KPSEHEVNENSR).

It belongs to the methyltransferase superfamily. RsmH family.

It localises to the cytoplasm. The enzyme catalyses cytidine(1402) in 16S rRNA + S-adenosyl-L-methionine = N(4)-methylcytidine(1402) in 16S rRNA + S-adenosyl-L-homocysteine + H(+). Functionally, specifically methylates the N4 position of cytidine in position 1402 (C1402) of 16S rRNA. This is Ribosomal RNA small subunit methyltransferase H from Aeromonas hydrophila subsp. hydrophila (strain ATCC 7966 / DSM 30187 / BCRC 13018 / CCUG 14551 / JCM 1027 / KCTC 2358 / NCIMB 9240 / NCTC 8049).